Reading from the N-terminus, the 66-residue chain is Small ribosomal subunit protein bS21 (66 aa).

This sequence belongs to the bacterial ribosomal protein bS21 family.

In Rickettsia akari (strain Hartford), this protein is Small ribosomal subunit protein bS21.